A 328-amino-acid polypeptide reads, in one-letter code: D-cysteine desulfhydrase (328 aa).

Residue lysine 51 is modified to N6-(pyridoxal phosphate)lysine.

It belongs to the ACC deaminase/D-cysteine desulfhydrase family. As to quaternary structure, homodimer. Requires pyridoxal 5'-phosphate as cofactor.

It carries out the reaction D-cysteine + H2O = hydrogen sulfide + pyruvate + NH4(+) + H(+). Catalyzes the alpha,beta-elimination reaction of D-cysteine and of several D-cysteine derivatives. It could be a defense mechanism against D-cysteine. The sequence is that of D-cysteine desulfhydrase from Escherichia coli O9:H4 (strain HS).